Reading from the N-terminus, the 352-residue chain is MPRLLIAASGTGGHIYPALSFADSLSNSWEIVWLGVPHRLEVELVPEKYNLIKLKVGGLQGNSFRKLFNLCKLLFASVQVSVLLRQKKINVIFTTGGYISAPSILGAKMAGIPVLLHESNAIPGKVTRLLGRFCDHVALGIPSASEYLQRCRTSFTGTPVRTEFLLEKSLPSWVPLGEGVLIVVMGGSQGAIKMNEMVRKILPCLIEKGCRVVHLTGKNDCFYRNRDQEKNHPNLVVRDFSDEIPALLRNADLAISRSGAGAICELMVTKTPSILIPFPSSTDQHQELNAAYMARFGGAIIVNQHDPEKNILKNIVSNLLDSNSLREMKLNMNNHDYSYPEKKIFEIIHSIS.

UDP-N-acetyl-alpha-D-glucosamine-binding positions include 11 to 13 (TGG), N120, R161, S188, and Q286.

The protein belongs to the glycosyltransferase 28 family. MurG subfamily.

It localises to the cell inner membrane. The enzyme catalyses di-trans,octa-cis-undecaprenyl diphospho-N-acetyl-alpha-D-muramoyl-L-alanyl-D-glutamyl-meso-2,6-diaminopimeloyl-D-alanyl-D-alanine + UDP-N-acetyl-alpha-D-glucosamine = di-trans,octa-cis-undecaprenyl diphospho-[N-acetyl-alpha-D-glucosaminyl-(1-&gt;4)]-N-acetyl-alpha-D-muramoyl-L-alanyl-D-glutamyl-meso-2,6-diaminopimeloyl-D-alanyl-D-alanine + UDP + H(+). It participates in cell wall biogenesis; peptidoglycan biosynthesis. Its function is as follows. Cell wall formation. Catalyzes the transfer of a GlcNAc subunit on undecaprenyl-pyrophosphoryl-MurNAc-pentapeptide (lipid intermediate I) to form undecaprenyl-pyrophosphoryl-MurNAc-(pentapeptide)GlcNAc (lipid intermediate II). The polypeptide is UDP-N-acetylglucosamine--N-acetylmuramyl-(pentapeptide) pyrophosphoryl-undecaprenol N-acetylglucosamine transferase (Prochlorococcus marinus (strain NATL2A)).